Reading from the N-terminus, the 399-residue chain is Zinc metalloproteinase nas-25 (399 aa).

An N-terminal signal peptide occupies residues 1 to 20 (MQIYLGITICLVAFLTVIDC). The Peptidase M12A domain maps to 41–237 (QVQRDLTYRW…DQINQYYQCY (197 aa)). N-linked (GlcNAc...) asparagine glycosylation is found at asparagine 52 and asparagine 61. Disulfide bonds link cysteine 82–cysteine 236, cysteine 106–cysteine 126, cysteine 240–cysteine 260, and cysteine 265–cysteine 274. Histidine 134 lines the Zn(2+) pocket. Glutamate 135 is an active-site residue. Zn(2+)-binding residues include histidine 138 and histidine 144. Positions 232 to 275 (QYYQCYDSCRNAGQLANCANGGIPNPNNCQVCNCPMGYGGDLCD) constitute an EGF-like domain. N-linked (GlcNAc...) asparagine glycosylation occurs at asparagine 371.

Zn(2+) is required as a cofactor. Expressed in pharyngeal muscles, pharyngeal-intestinal valve, rectal gland cells and arcade cells.

It is found in the secreted. Its function is as follows. Metalloprotease. The polypeptide is Zinc metalloproteinase nas-25 (nas-25) (Caenorhabditis elegans).